A 423-amino-acid polypeptide reads, in one-letter code: Glucose-1-phosphate adenylyltransferase (423 aa).

Residues Tyr-110, Gly-175, 190-191, and Ser-208 each bind alpha-D-glucose 1-phosphate; that span reads EK.

The protein belongs to the bacterial/plant glucose-1-phosphate adenylyltransferase family. In terms of assembly, homotetramer.

The catalysed reaction is alpha-D-glucose 1-phosphate + ATP + H(+) = ADP-alpha-D-glucose + diphosphate. Its pathway is glycan biosynthesis; glycogen biosynthesis. Its function is as follows. Involved in the biosynthesis of ADP-glucose, a building block required for the elongation reactions to produce glycogen. Catalyzes the reaction between ATP and alpha-D-glucose 1-phosphate (G1P) to produce pyrophosphate and ADP-Glc. The sequence is that of Glucose-1-phosphate adenylyltransferase from Nitrosococcus oceani (strain ATCC 19707 / BCRC 17464 / JCM 30415 / NCIMB 11848 / C-107).